The chain runs to 485 residues: MENGFSLVPKEEEEEEDYSNEKSEDQTSYYLSTEMMKKVSFMAAPMVAVAASQYLLQVISIVMAGHLDELSLSAVAIATSLTNVTGFSLIFGLAGALETLCGQAFGAGQFRNISAYTYGSMLCLLLVCFPISLLWVFMDKLLELFHQDPLISQLACRYSIWLIPALFGYSVLQSMTRFFQSQGLVLPLFLSSLGALFFHVPFSWLLVYKLRFGIVGAALSIGFSYWLNVGLLWAFMRDSALYRKNWNLRAQEIFLSMKQFITLAIPTAMMTCLEWWSFELLILMSGLLPNSKLETSVLSICLTMSSLHYVIVNAIGAAASTHVSNKLGAGNPKAARSAANSAIFLGMIDAAIVSISLYSYRRNWAYIFSNESEVADYVTQITPFLCLSIGVDSFLAVLSGVARGTGWQHIGAYANIGSYYLVGIPVGSILCFVVKLRGKGLWIGILVGSTLQTIVLALVTFFTNWEQEVAKARDRVIEMIPQEII.

The segment at 1-26 (MENGFSLVPKEEEEEEDYSNEKSEDQ) is disordered. The next 12 membrane-spanning stretches (helical) occupy residues 41–61 (FMAA…VISI), 74–94 (AVAI…FGLA), 118–138 (YGSM…WVFM), 159–179 (SIWL…TRFF), 188–208 (LFLS…LLVY), 212–232 (FGIV…VGLL), 263–283 (LAIP…LLIL), 297–317 (VLSI…AIGA), 338–358 (AANS…ISLY), 381–401 (ITPF…LSGV), 414–434 (ANIG…CFVV), and 442–462 (WIGI…VTFF).

Belongs to the multi antimicrobial extrusion (MATE) (TC 2.A.66.1) family.

It localises to the membrane. This is Protein DETOXIFICATION 8 from Arabidopsis thaliana (Mouse-ear cress).